A 247-amino-acid polypeptide reads, in one-letter code: TLC domain-containing protein 1 (247 aa).

The signal sequence occupies residues methionine 1–cysteine 27. Topologically, residues arginine 28–histidine 46 are extracellular. The TLC domain maps to leucine 40–arginine 234. A helical membrane pass occupies residues asparagine 47–tryptophan 67. At glutamine 68 to cysteine 83 the chain is on the cytoplasmic side. Residues glycine 84–valine 104 form a helical membrane-spanning segment. Residues serine 105 to glycine 123 lie on the Extracellular side of the membrane. The segment at residues alanine 124–valine 144 is an intramembrane region (helical). At glutamate 145–tyrosine 173 the chain is on the extracellular side. The helical transmembrane segment at valine 174–phenylalanine 194 threads the bilayer. Topologically, residues leucine 195–arginine 201 are cytoplasmic. The chain crosses the membrane as a helical span at residues threonine 202–phenylalanine 222. The Extracellular segment spans residues serine 223–glutamate 247.

Its subcellular location is the cell membrane. Regulates the composition and fluidity of the plasma membrane. Inhibits the incorporation of membrane-fluidizing phospholipids containing omega-3 long-chain polyunsaturated fatty acids (LCPUFA) and thereby promotes membrane rigidity. Does not appear to have any effect on LCPUFA synthesis. This Rattus norvegicus (Rat) protein is TLC domain-containing protein 1 (Tlcd1).